Reading from the N-terminus, the 806-residue chain is SH3-containing GRB2-like protein 3-interacting protein 1 (806 aa).

Disordered regions lie at residues 1-115 (MMEG…ESHK) and 142-278 (SIGN…QAAT). Basic and acidic residues-rich tracts occupy residues 16–32 (RKKE…DRDG) and 40–54 (PPYH…EGGK). Serine 78, serine 104, serine 105, serine 107, serine 149, serine 151, serine 156, and serine 169 each carry phosphoserine. Phosphothreonine is present on residues threonine 180 and threonine 182. Phosphoserine occurs at positions 236 and 243. Residues 245 to 260 (TGTPPPLPPKTVPATP) show a composition bias toward pro residues. A phosphothreonine mark is found at threonine 247 and threonine 259. Residues serine 265, aspartate 274, serine 287, serine 289, serine 300, serine 316, and serine 319 each carry the phosphoserine modification. The span at 265 to 276 (SPLTVATGNDQA) shows a compositional bias: polar residues. Over residues 315-324 (FSDASPEHVT) the composition is skewed to basic and acidic residues. The disordered stretch occupies residues 315–533 (FSDASPEHVT…SRGPSPLTMG (219 aa)). Residues threonine 324, threonine 328, and threonine 335 each carry the phosphothreonine modification. A compositionally biased stretch (low complexity) spans 335–345 (TPPAASDIPAD). Alanine 338 bears the Phosphoserine mark. Over residues 346 to 369 (SPAPAPPGPTGSAGPPGPPGPRHV) the composition is skewed to pro residues. Position 371 is a phosphoserine (serine 371). The span at 377–392 (EVQKKVAEQTFIKDDY) shows a compositional bias: basic and acidic residues. At serine 398 the chain carries Phosphoserine. Position 409 is a phosphothreonine (threonine 409). The segment covering 436 to 453 (TSGASSPARPATPLVPCS) has biased composition (low complexity). A compositionally biased stretch (pro residues) spans 454 to 473 (TTPPPPPPRPPSRPKLPPGK). 2 stretches are compositionally biased toward low complexity: residues 480–490 (SRPFSPPIHSS) and 497–520 (PLAR…TTPT). Phosphoserine is present on residues serine 484, serine 505, and glycine 533. The MHD domain occupies 537 to 805 (TLPVAAAFTE…RFAAGKYLAD (269 aa)). Interaction with DPF motifs-containing proteins regions lie at residues 539 to 545 (PVAAAFT), 571 to 573 (SFP), 645 to 648 (TYYN), and 791 to 796 (SLIKKR). The interval 627 to 806 (MPNLMTHLKK…FAAGKYLADN (180 aa)) is necessary and sufficient to mediate interaction with CANX.

Interacts with proteins essential or regulating the formation of functional clathrin-coated pits. Interacts with CANX. Interacts with AP2A1. Interacts with EPS15. Interacts with SH3GL3. Interacts with AMPH. Interacts with ITSN1 (via SH3 domains). Interacts with and REPS1. As to expression, detected in brain, spinal cord and cerebellum.

It localises to the membrane. The protein localises to the clathrin-coated pit. May function in clathrin-mediated endocytosis. Has both a membrane binding/tubulating activity and the ability to recruit proteins essential to the formation of functional clathrin-coated pits. Has a preference for membranes enriched in phosphatidylserine and phosphoinositides and is required for the endocytosis of the transferrin receptor. May also bind tubulin. May play a role in the regulation of energy homeostasis. The polypeptide is SH3-containing GRB2-like protein 3-interacting protein 1 (Sgip1) (Mus musculus (Mouse)).